Consider the following 361-residue polypeptide: UDP-N-acetylglucosamine--N-acetylmuramyl-(pentapeptide) pyrophosphoryl-undecaprenol N-acetylglucosamine transferase (361 aa).

UDP-N-acetyl-alpha-D-glucosamine is bound by residues 12–14 (TGG), N126, R167, S192, I247, and Q292.

It belongs to the glycosyltransferase 28 family. MurG subfamily.

Its subcellular location is the cell inner membrane. It carries out the reaction di-trans,octa-cis-undecaprenyl diphospho-N-acetyl-alpha-D-muramoyl-L-alanyl-D-glutamyl-meso-2,6-diaminopimeloyl-D-alanyl-D-alanine + UDP-N-acetyl-alpha-D-glucosamine = di-trans,octa-cis-undecaprenyl diphospho-[N-acetyl-alpha-D-glucosaminyl-(1-&gt;4)]-N-acetyl-alpha-D-muramoyl-L-alanyl-D-glutamyl-meso-2,6-diaminopimeloyl-D-alanyl-D-alanine + UDP + H(+). It functions in the pathway cell wall biogenesis; peptidoglycan biosynthesis. Functionally, cell wall formation. Catalyzes the transfer of a GlcNAc subunit on undecaprenyl-pyrophosphoryl-MurNAc-pentapeptide (lipid intermediate I) to form undecaprenyl-pyrophosphoryl-MurNAc-(pentapeptide)GlcNAc (lipid intermediate II). This is UDP-N-acetylglucosamine--N-acetylmuramyl-(pentapeptide) pyrophosphoryl-undecaprenol N-acetylglucosamine transferase from Syntrophus aciditrophicus (strain SB).